Consider the following 653-residue polypeptide: Sodium-dependent phosphate transporter 2 (653 aa).

The Extracellular segment spans residues 1–5; the sequence is MAIDG. A helical membrane pass occupies residues 6–26; sequence YLWMVILGFIIAFILAFSVGA. Residues 27 to 46 are Cytoplasmic-facing; that stretch reads NDVANSFGTAVGSGVVTLRQ. A helical transmembrane segment spans residues 47-67; sequence ACILASIFETTGSVLLGAKVG. Residues 68–86 lie on the Extracellular side of the membrane; it reads ETIRKGIIDVNLYNETVET. Residue Asn81 is glycosylated (N-linked (GlcNAc...) asparagine). Residues 87 to 107 form a helical membrane-spanning segment; sequence LMAGEVSAMVGSAVWQLIASF. Residues 108–109 lie on the Cytoplasmic side of the membrane; sequence LR. A helical membrane pass occupies residues 110–130; that stretch reads LPISGTHCIVGSTIGFSLVAI. Topologically, residues 131 to 142 are extracellular; that stretch reads GTQGVQWMELVK. Residues 143–163 form a helical membrane-spanning segment; that stretch reads IVASWFISPLLSGFMSGVLFI. Over 164–190 the chain is Cytoplasmic; sequence LIRIFILKKEDPVPNGLRALPVFYAAT. The chain crosses the membrane as a helical span at residues 191–211; sequence IAINVFSIMYTGAPVLGLVLP. The Extracellular portion of the chain corresponds to 212-213; the sequence is IW. A helical transmembrane segment spans residues 214–234; that stretch reads AIALISFGVALLFALFVWLFV. Residues 235-483 lie on the Cytoplasmic side of the membrane; sequence CPWMRRKIAG…EEKEEKDTAE (249 aa). Residues Ser253, Ser256, Ser259, and Ser268 each carry the phosphoserine modification. The disordered stretch occupies residues 275 to 311; it reads PGAKANDDSTVPLTGSAGEPSGTSEGTSVGNHPRASY. A compositionally biased stretch (polar residues) spans 295–304; sequence SGTSEGTSVG. Ser316 and Ser385 each carry phosphoserine. The interval 459–478 is disordered; sequence SELTDPDQPRDDPAEEEKEE. A helical membrane pass occupies residues 484 to 504; it reads VHLLFHFLQVLTACFGSFAHG. Residues 505–531 lie on the Extracellular side of the membrane; sequence GNDVSNAIGPLVALWLIYEQGAVLQEA. A helical membrane pass occupies residues 532-552; the sequence is VTPVWLLFYGGVGICTGLWVW. Topologically, residues 553–572 are cytoplasmic; it reads GRRVIQTMGKDLTPITPSSG. Residues 573 to 587 form a helical membrane-spanning segment; that stretch reads FTIELASAFTVVIAS. Topologically, residues 588–594 are extracellular; the sequence is NVGLPVS. The helical transmembrane segment at 595 to 610 threads the bilayer; that stretch reads TTHCKVGSVVAVGWIR. Residues 611-622 are Cytoplasmic-facing; the sequence is SRKAVDWRLFRN. Residues 623–643 traverse the membrane as a helical segment; that stretch reads IFVAWFVTVPVAGLFSAAIMA. The Extracellular segment spans residues 644–653; the sequence is LLMYGILPYV.

It belongs to the inorganic phosphate transporter (PiT) (TC 2.A.20) family. In terms of assembly, homodimer.

Its subcellular location is the cell membrane. It is found in the apical cell membrane. It carries out the reaction 2 Na(+)(out) + phosphate(out) = 2 Na(+)(in) + phosphate(in). In terms of biological role, sodium-phosphate symporter which preferentially transports the monovalent form of phosphate with a stoichiometry of two sodium ions per phosphate ion. Plays a critical role in the determination of bone quality and strength by providing phosphate for bone mineralization. Required to maintain normal cerebrospinal fluid phosphate levels. Mediates phosphate-induced calcification of vascular smooth muscle cells (VCMCs) and can functionally compensate for loss of SLC20A1 in VCMCs. Functionally, (Microbial infection) Functions as a retroviral receptor for feline leukemia virus subgroup B (FeLV-B). This is Sodium-dependent phosphate transporter 2 (SLC20A2) from Felis catus (Cat).